A 593-amino-acid chain; its full sequence is Metal-response element-binding transcription factor 2 (593 aa).

Positions 1 to 35 are disordered; the sequence is MRDSTGAGNSLVHKRSPLRRNQKTPTSLTKLSLQD. The span at 12–22 shows a compositional bias: basic residues; it reads VHKRSPLRRNQ. Polar residues predominate over residues 23–32; sequence KTPTSLTKLS. T24 carries the phosphothreonine modification. The Tudor domain occupies 44 to 101; sequence CKFEEGQDVLARWSDGLFYLGTIKKINILKQSCFIIFEDSSKSWVLWKDIQTGATGSG. 2 consecutive PHD-type zinc fingers follow at residues 102–157 and 201–255; these read EMVC…CVFA and QCYC…CSSG. K360 is covalently cross-linked (Glycyl lysine isopeptide (Lys-Gly) (interchain with G-Cter in SUMO2)). The span at 360-374 shows a compositional bias: basic and acidic residues; that stretch reads KAEKEPEGTSHEFKI. Disordered regions lie at residues 360 to 411 and 424 to 486; these read KAEK…PYTR and KESI…TRTG. Positions 445–454 are enriched in polar residues; that stretch reads TAHSSNTSDV. Phosphoserine is present on S452. Residues 459–471 show a composition bias toward low complexity; sequence ASSAKETTSSSIS. A Glycyl lysine isopeptide (Lys-Gly) (interchain with G-Cter in SUMO2) cross-link involves residue K522.

It belongs to the Polycomblike family. Associates with the PRC2 complex, which consists of the core components EED, EZH1 or EZH2, SUZ12, and RBBP4, and various combinations of accessory subunits including AEBP2, JARID2, PHF19, MTF2 and EPOP. Forms a dimeric PRC2.1 (class 1, PRC-PCL) complex consisting of at least SUZ12, RBBP4, and PHF19 or MTF2; PHF19 and MTF2 stabilize the dimeric structure which enhances PRC2 interaction with chromatin.

It is found in the nucleus. Polycomb group (PcG) protein that specifically binds histone H3 trimethylated at 'Lys-36' (H3K36me3) and recruits the PRC2 complex, thus enhancing PRC2 H3K27me3 methylation activity. Regulates the transcriptional networks during embryonic stem cell self-renewal and differentiation. Promotes recruitment of the PRC2 complex to the inactive X chromosome in differentiating XX ES cells and PRC2 recruitment to target genes in undifferentiated ES cells. Required to repress Hox genes by enhancing H3K27me3 methylation of the PRC2 complex. In some conditions may act as an inhibitor of PRC2 activity: able to activate the CDKN2A gene and promote cellular senescence by suppressing the catalytic activity of the PRC2 complex locally. Binds to the metal-regulating-element (MRE) of MT1A gene promoter. This chain is Metal-response element-binding transcription factor 2 (MTF2), found in Homo sapiens (Human).